Reading from the N-terminus, the 37-residue chain is Large ribosomal subunit protein bL36B (37 aa).

Belongs to the bacterial ribosomal protein bL36 family.

The protein is Large ribosomal subunit protein bL36B of Saccharopolyspora erythraea (strain ATCC 11635 / DSM 40517 / JCM 4748 / NBRC 13426 / NCIMB 8594 / NRRL 2338).